A 729-amino-acid polypeptide reads, in one-letter code: Fatty acid oxidation complex subunit alpha (729 aa).

Positions 1–189 (MLYQGETLQL…KVGLVDAVVA (189 aa)) are enoyl-CoA hydratase/isomerase. A substrate-binding site is contributed by Asp296. A 3-hydroxyacyl-CoA dehydrogenase region spans residues 311 to 729 (EAPKQAAVLG…LSDVSTGQPA (419 aa)). Residues Met324, Asp343, 400–402 (VVE), Lys407, and Ser429 contribute to the NAD(+) site. His450 functions as the For 3-hydroxyacyl-CoA dehydrogenase activity in the catalytic mechanism. Asn453 provides a ligand contact to NAD(+). 2 residues coordinate substrate: Asn500 and Tyr660.

This sequence in the N-terminal section; belongs to the enoyl-CoA hydratase/isomerase family. In the C-terminal section; belongs to the 3-hydroxyacyl-CoA dehydrogenase family. As to quaternary structure, heterotetramer of two alpha chains (FadB) and two beta chains (FadA).

It carries out the reaction a (3S)-3-hydroxyacyl-CoA + NAD(+) = a 3-oxoacyl-CoA + NADH + H(+). The enzyme catalyses a (3S)-3-hydroxyacyl-CoA = a (2E)-enoyl-CoA + H2O. It catalyses the reaction a 4-saturated-(3S)-3-hydroxyacyl-CoA = a (3E)-enoyl-CoA + H2O. The catalysed reaction is (3S)-3-hydroxybutanoyl-CoA = (3R)-3-hydroxybutanoyl-CoA. It carries out the reaction a (3Z)-enoyl-CoA = a 4-saturated (2E)-enoyl-CoA. The enzyme catalyses a (3E)-enoyl-CoA = a 4-saturated (2E)-enoyl-CoA. Its pathway is lipid metabolism; fatty acid beta-oxidation. Its function is as follows. Involved in the aerobic and anaerobic degradation of long-chain fatty acids via beta-oxidation cycle. Catalyzes the formation of 3-oxoacyl-CoA from enoyl-CoA via L-3-hydroxyacyl-CoA. It can also use D-3-hydroxyacyl-CoA and cis-3-enoyl-CoA as substrate. The sequence is that of Fatty acid oxidation complex subunit alpha from Serratia proteamaculans (strain 568).